Reading from the N-terminus, the 208-residue chain is Uracil phosphoribosyltransferase (208 aa).

Residues arginine 78, arginine 103, and 130 to 138 each bind 5-phospho-alpha-D-ribose 1-diphosphate; that span reads DPMLATGGS. Uracil contacts are provided by residues isoleucine 193 and 198–200; that span reads GDA. Aspartate 199 is a 5-phospho-alpha-D-ribose 1-diphosphate binding site.

This sequence belongs to the UPRTase family. Requires Mg(2+) as cofactor.

It catalyses the reaction UMP + diphosphate = 5-phospho-alpha-D-ribose 1-diphosphate + uracil. It functions in the pathway pyrimidine metabolism; UMP biosynthesis via salvage pathway; UMP from uracil: step 1/1. Its activity is regulated as follows. Allosterically activated by GTP. Functionally, catalyzes the conversion of uracil and 5-phospho-alpha-D-ribose 1-diphosphate (PRPP) to UMP and diphosphate. This is Uracil phosphoribosyltransferase from Neisseria meningitidis serogroup C (strain 053442).